A 182-amino-acid chain; its full sequence is ATP-dependent protease subunit HslV (182 aa).

T12 is an active-site residue. Positions 167, 170, and 173 each coordinate Na(+).

This sequence belongs to the peptidase T1B family. HslV subfamily. A double ring-shaped homohexamer of HslV is capped on each side by a ring-shaped HslU homohexamer. The assembly of the HslU/HslV complex is dependent on binding of ATP.

The protein resides in the cytoplasm. It carries out the reaction ATP-dependent cleavage of peptide bonds with broad specificity.. Its activity is regulated as follows. Allosterically activated by HslU binding. In terms of biological role, protease subunit of a proteasome-like degradation complex believed to be a general protein degrading machinery. This chain is ATP-dependent protease subunit HslV, found in Acidiphilium cryptum (strain JF-5).